The primary structure comprises 51 residues: Sperm protamine P1 (51 aa).

This sequence belongs to the protamine P1 family. In terms of tissue distribution, testis.

The protein localises to the nucleus. The protein resides in the chromosome. Protamines substitute for histones in the chromatin of sperm during the haploid phase of spermatogenesis. They compact sperm DNA into a highly condensed, stable and inactive complex. The chain is Sperm protamine P1 (PRM1) from Trachypithecus francoisi (Francois' leaf monkey).